Here is a 316-residue protein sequence, read N- to C-terminus: E3 ubiquitin-protein ligase rnf146 (316 aa).

Residues C36 to R74 form an RING-type zinc finger. Residues E91–R167 enclose the WWE domain. A glycoprotein-binding residues include Y107, R110, W114, Y144, Q153, R163, and K175. The tract at residues G257 to P316 is disordered. The span at H293–R310 shows a compositional bias: polar residues.

It localises to the cytoplasm. Its subcellular location is the cytosol. It is found in the nucleus. The catalysed reaction is S-ubiquitinyl-[E2 ubiquitin-conjugating enzyme]-L-cysteine + [acceptor protein]-L-lysine = [E2 ubiquitin-conjugating enzyme]-L-cysteine + N(6)-ubiquitinyl-[acceptor protein]-L-lysine.. It participates in protein modification; protein ubiquitination. E3 ubiquitin-protein ligase that specifically binds poly-ADP-ribosylated proteins and mediates their ubiquitination and subsequent degradation. May regulate many important biological processes, such as cell survival and DNA damage response. Acts as an activator of the Wnt signaling pathway by mediating the ubiquitination of poly-ADP-ribosylated proteins. Neuroprotective protein. Protects against cell death induced by DNA damaging agents and rescues cells from G1 arrest. Promotes cell survival after gamma-irradiation. Facilitates DNA repair. This Xenopus tropicalis (Western clawed frog) protein is E3 ubiquitin-protein ligase rnf146 (rnf146).